The following is a 598-amino-acid chain: UvrABC system protein C (598 aa).

Positions 11 to 91 (QKPGVYIMHN…IKKYRPHYNI (81 aa)) constitute a GIY-YIG domain. Residues 195-230 (KTTIKKLKKDMNRYAKNMEFEKAAMLRDQIDTIKIT) enclose the UVR domain.

It belongs to the UvrC family. As to quaternary structure, interacts with UvrB in an incision complex.

The protein resides in the cytoplasm. Functionally, the UvrABC repair system catalyzes the recognition and processing of DNA lesions. UvrC both incises the 5' and 3' sides of the lesion. The N-terminal half is responsible for the 3' incision and the C-terminal half is responsible for the 5' incision. The sequence is that of UvrABC system protein C from Methanosphaera stadtmanae (strain ATCC 43021 / DSM 3091 / JCM 11832 / MCB-3).